The following is an 810-amino-acid chain: MSYDHKAIEKRWQTYWDEHKTFKTAPETSGKPKYYVMNMFPYPSGQGLHVGHPESYTATDIMARFNRMRGFNVLQPMGWDAFGLPAEQYAIKTGHNPADFTNENIKHFKKQVKSLGFSYDWDREINTTDPEYYKWTQWIFEQLYKKGLAYEDEIMVNWAPDFPGGGIVVANEEVIDGKTERGSYPVYRVPMKQWVLRITKYAERLLSDLDDLDWPEAIKEQQRNWIGKSTGAAVFFKVDGKSDYQVEVYTTRPDTLFGASYMVLAPEHDLVDKITTSECRADVDAYKAKIASKSDLERTDLNREKTGAFTGAYGINPVNGEKIPIWIADYVLSSYGTGAIMAVPAHDTRDYEFAKKFDLPIRQVIKGGDISKEAFTGDGTHINSAFLDVLDKKQAIEKIIDWLEEHDAGHKQVNYKLRDWIFSRQRYWGEPIPVIHWEDGKQTLVPESELPLRLPHLNQDQMKPSGTGESPLANAKSWLEVTRQDGVKGRRETNTMPQWAGSSWYFLRYIDPHNDKVLADPEKLKYWMNVDLYVGGAEHAVLHLLYARFWHKFLYDLGIVPTKEPFQKLVNQGMILGTNHEKMSKSKGNVVNPDEIVDSYGADALRVYEMFMGPLTQSKPWSTESLAGIRRYLDRVWRIFTSDGDGINPIIVSENDHKLDKIFNQTVKKVTEDYAAMRFNTAISQMMVFINETFKAEKLPKKYMNAFLQLLNPVAPHITEELWQRMGHQETIAYATWPTYDESQIIEKQIEMAVQINGKVRAKINTPVDISRDELAKMATDNPDVKKQVADKNIVKIIAIPGKIINIVVK.

The 'HIGH' region signature appears at 41-52 (PYPSGQGLHVGH). Positions 582–586 (KMSKS) match the 'KMSKS' region motif. ATP is bound at residue K585.

This sequence belongs to the class-I aminoacyl-tRNA synthetase family.

The protein resides in the cytoplasm. It catalyses the reaction tRNA(Leu) + L-leucine + ATP = L-leucyl-tRNA(Leu) + AMP + diphosphate. The sequence is that of Leucine--tRNA ligase from Oenococcus oeni (strain ATCC BAA-331 / PSU-1).